The sequence spans 228 residues: Cytochrome c oxidase subunit 2 (228 aa).

The Mitochondrial intermembrane portion of the chain corresponds to 1-26 (MSTWANLGLQDSASPLMEQLIFFHDH). Residues 27 to 48 (ALLILVMITVLVGYLMFMLFFN) form a helical membrane-spanning segment. Topologically, residues 49 to 62 (NYVNRFLLHGQLIE) are mitochondrial matrix. The helical transmembrane segment at 63–82 (MIWTILPAIILLFIALPSLR) threads the bilayer. At 83–228 (LLYLLDEINE…FIKWISSNNS (146 aa)) the chain is on the mitochondrial intermembrane side. Cu cation-binding residues include His161, Cys196, Glu198, Cys200, His204, and Met207. A Mg(2+)-binding site is contributed by Glu198.

It belongs to the cytochrome c oxidase subunit 2 family. Component of the cytochrome c oxidase (complex IV, CIV), a multisubunit enzyme composed of a catalytic core of 3 subunits and several supernumerary subunits. The complex exists as a monomer or a dimer and forms supercomplexes (SCs) in the inner mitochondrial membrane with ubiquinol-cytochrome c oxidoreductase (cytochrome b-c1 complex, complex III, CIII). The cofactor is Cu cation.

Its subcellular location is the mitochondrion inner membrane. It carries out the reaction 4 Fe(II)-[cytochrome c] + O2 + 8 H(+)(in) = 4 Fe(III)-[cytochrome c] + 2 H2O + 4 H(+)(out). Component of the cytochrome c oxidase, the last enzyme in the mitochondrial electron transport chain which drives oxidative phosphorylation. The respiratory chain contains 3 multisubunit complexes succinate dehydrogenase (complex II, CII), ubiquinol-cytochrome c oxidoreductase (cytochrome b-c1 complex, complex III, CIII) and cytochrome c oxidase (complex IV, CIV), that cooperate to transfer electrons derived from NADH and succinate to molecular oxygen, creating an electrochemical gradient over the inner membrane that drives transmembrane transport and the ATP synthase. Cytochrome c oxidase is the component of the respiratory chain that catalyzes the reduction of oxygen to water. Electrons originating from reduced cytochrome c in the intermembrane space (IMS) are transferred via the dinuclear copper A center (CU(A)) of subunit 2 and heme A of subunit 1 to the active site in subunit 1, a binuclear center (BNC) formed by heme A3 and copper B (CU(B)). The BNC reduces molecular oxygen to 2 water molecules using 4 electrons from cytochrome c in the IMS and 4 protons from the mitochondrial matrix. This is Cytochrome c oxidase subunit 2 (mt:CoII) from Drosophila simulans (Fruit fly).